Reading from the N-terminus, the 431-residue chain is Glucose-1-phosphate adenylyltransferase (431 aa).

K39 lines the beta-D-fructose 1,6-bisphosphate pocket. Residues R40, H46, and R52 each coordinate AMP. Y114 provides a ligand contact to alpha-D-glucose 1-phosphate. Residue R130 coordinates AMP. Alpha-D-glucose 1-phosphate is bound by residues G179, E194–K195, and S212. Residues E370 and R386 each contribute to the AMP site. Beta-D-fructose 1,6-bisphosphate is bound by residues R419 to R423 and Q429 to R431.

Belongs to the bacterial/plant glucose-1-phosphate adenylyltransferase family. Homotetramer.

The catalysed reaction is alpha-D-glucose 1-phosphate + ATP + H(+) = ADP-alpha-D-glucose + diphosphate. It participates in glycan biosynthesis; glycogen biosynthesis. With respect to regulation, allosterically activated by fructose-1,6-bisphosphate (F16BP) and inhibited by AMP. Functionally, involved in the biosynthesis of ADP-glucose, a building block required for the elongation reactions to produce glycogen. Catalyzes the reaction between ATP and alpha-D-glucose 1-phosphate (G1P) to produce pyrophosphate and ADP-Glc. In Escherichia fergusonii (strain ATCC 35469 / DSM 13698 / CCUG 18766 / IAM 14443 / JCM 21226 / LMG 7866 / NBRC 102419 / NCTC 12128 / CDC 0568-73), this protein is Glucose-1-phosphate adenylyltransferase.